An 87-amino-acid chain; its full sequence is Phosphoribosyl-ATP pyrophosphatase (87 aa).

This sequence belongs to the PRA-PH family.

It localises to the cytoplasm. The enzyme catalyses 1-(5-phospho-beta-D-ribosyl)-ATP + H2O = 1-(5-phospho-beta-D-ribosyl)-5'-AMP + diphosphate + H(+). It participates in amino-acid biosynthesis; L-histidine biosynthesis; L-histidine from 5-phospho-alpha-D-ribose 1-diphosphate: step 2/9. This is Phosphoribosyl-ATP pyrophosphatase from Kocuria rhizophila (strain ATCC 9341 / DSM 348 / NBRC 103217 / DC2201).